An 889-amino-acid polypeptide reads, in one-letter code: Alanine--tRNA ligase (889 aa).

Histidine 574, histidine 578, cysteine 682, and histidine 686 together coordinate Zn(2+).

Belongs to the class-II aminoacyl-tRNA synthetase family. It depends on Zn(2+) as a cofactor.

The protein localises to the cytoplasm. The catalysed reaction is tRNA(Ala) + L-alanine + ATP = L-alanyl-tRNA(Ala) + AMP + diphosphate. Functionally, catalyzes the attachment of alanine to tRNA(Ala) in a two-step reaction: alanine is first activated by ATP to form Ala-AMP and then transferred to the acceptor end of tRNA(Ala). Also edits incorrectly charged Ser-tRNA(Ala) and Gly-tRNA(Ala) via its editing domain. The polypeptide is Alanine--tRNA ligase (Orientia tsutsugamushi (strain Ikeda) (Rickettsia tsutsugamushi)).